A 604-amino-acid polypeptide reads, in one-letter code: Aspartate--tRNA(Asp/Asn) ligase (604 aa).

Glu-175 serves as a coordination point for L-aspartate. The interval 199 to 202 (QMFK) is aspartate. L-aspartate-binding residues include Arg-221 and His-451. 221-223 (RDE) is an ATP binding site. Glu-485 contributes to the ATP binding site. Arg-492 contacts L-aspartate. 537–540 (GIDR) contacts ATP.

Belongs to the class-II aminoacyl-tRNA synthetase family. Type 1 subfamily. As to quaternary structure, homodimer.

The protein resides in the cytoplasm. It carries out the reaction tRNA(Asx) + L-aspartate + ATP = L-aspartyl-tRNA(Asx) + AMP + diphosphate. Aspartyl-tRNA synthetase with relaxed tRNA specificity since it is able to aspartylate not only its cognate tRNA(Asp) but also tRNA(Asn). Reaction proceeds in two steps: L-aspartate is first activated by ATP to form Asp-AMP and then transferred to the acceptor end of tRNA(Asp/Asn). This Erythrobacter litoralis (strain HTCC2594) protein is Aspartate--tRNA(Asp/Asn) ligase.